Consider the following 268-residue polypeptide: Non-homologous end joining protein Ku (268 aa).

Residues 13–175 enclose the Ku domain; the sequence is VSLVTCPVTM…TLHDGNAVRN (163 aa). The interval 174–194 is disordered; that stretch reads RNGGHPAARTRPASEAESADS.

Belongs to the prokaryotic Ku family. As to quaternary structure, homodimer. Interacts with LigD.

In terms of biological role, with LigD forms a non-homologous end joining (NHEJ) DNA repair enzyme, which repairs dsDNA breaks with reduced fidelity. Binds linear dsDNA with 5'- and 3'- overhangs but not closed circular dsDNA nor ssDNA. Recruits and stimulates the ligase activity of LigD. This Gluconacetobacter diazotrophicus (strain ATCC 49037 / DSM 5601 / CCUG 37298 / CIP 103539 / LMG 7603 / PAl5) protein is Non-homologous end joining protein Ku.